The primary structure comprises 188 residues: MDWLTILGISVALAMDAFAVALAAGAVISPITGRHLFRLGFHFGLFQALMPIGGWLLGMTVQKWISAYDHWIAFGLLAYVGGRMVHEAFEEDDEEKTPSDPTKGMTMVMLSVATSIDAFAVGLSIAMLGVSVWLPATVIGLVAGVLTVAGMLLGRRLGEKWGKRVEICGGLVLCLIGLKILLEHTLLK.

The next 6 membrane-spanning stretches (helical) occupy residues 3 to 23 (WLTILGISVALAMDAFAVALA), 39 to 59 (LGFHFGLFQALMPIGGWLLGM), 65 to 85 (ISAYDHWIAFGLLAYVGGRMV), 104 to 124 (GMTMVMLSVATSIDAFAVGLS), 125 to 145 (IAMLGVSVWLPATVIGLVAGV), and 167 to 187 (ICGGLVLCLIGLKILLEHTLL).

Belongs to the MntP (TC 9.B.29) family.

It localises to the cell inner membrane. In terms of biological role, probably functions as a manganese efflux pump. The polypeptide is Putative manganese efflux pump MntP (Citrifermentans bemidjiense (strain ATCC BAA-1014 / DSM 16622 / JCM 12645 / Bem) (Geobacter bemidjiensis)).